The chain runs to 230 residues: Ribonuclease 3 (230 aa).

The RNase III domain occupies 1–134 (MKQLEELLST…FLGALLLDKG (134 aa)). Glu-47 contacts Mg(2+). The active site involves Asp-51. Residues Asp-120 and Glu-123 each coordinate Mg(2+). Residue Glu-123 is part of the active site. Residues 160 to 229 (DYKTCLQEFL…AKNALAQLSE (70 aa)) enclose the DRBM domain.

Belongs to the ribonuclease III family. Homodimer. Mg(2+) is required as a cofactor.

It localises to the cytoplasm. The enzyme catalyses Endonucleolytic cleavage to 5'-phosphomonoester.. Digests double-stranded RNA. Involved in the processing of primary rRNA transcript to yield the immediate precursors to the large and small rRNAs (23S and 16S). Processes some mRNAs, and tRNAs when they are encoded in the rRNA operon. Processes pre-crRNA and tracrRNA of type II CRISPR loci if present in the organism. The polypeptide is Ribonuclease 3 (Streptococcus pyogenes serotype M28 (strain MGAS6180)).